The chain runs to 55 residues: MAKGVREKIKLVSSAGTGHFYTTTKNKRTKPEKLELKKFDPVVRQHVLYKEAKIK.

This sequence belongs to the bacterial ribosomal protein bL33 family.

In Yersinia pestis (strain Pestoides F), this protein is Large ribosomal subunit protein bL33.